A 250-amino-acid polypeptide reads, in one-letter code: DNA repair protein RecO (250 aa).

It belongs to the RecO family.

Involved in DNA repair and RecF pathway recombination. The protein is DNA repair protein RecO of Syntrophobacter fumaroxidans (strain DSM 10017 / MPOB).